Reading from the N-terminus, the 300-residue chain is Fatty acid hydroxylase uhd1 (300 aa).

Residues 14-20 (GANGFVG), Arg39, 63-64 (DL), 83-85 (VAS), Tyr156, Lys160, 183-186 (PVYI), and Ser199 each bind NADP(+). The active-site Proton donor is the Lys160.

Belongs to the NAD(P)-dependent epimerase/dehydratase family. Dihydroflavonol-4-reductase subfamily.

The protein operates within secondary metabolite biosynthesis. Fatty acid hydroxylase; part of the gene cluster that mediates the biosynthesis of the glycolipid biosurfactant ustilagic acid (UA). UA is a secreted cellobiose glycolipid that is toxic for many microorganisms and confers biocontrol activity to U.maydis. UA consists of 15,16-dihydroxypalmitic or 2,15,16-trihydroxypalmitic acid, which is O-glycosidically linked to cellobiose at its terminal hydroxyl group. In addition, the cellobiose moiety is acetylated and acylated with a short-chain hydroxy fatty acid. UA biosynthesis starts with omega-hydroxylation of palmitic acid catalyzed by the cytochrome P450 monooxygenase cyp1. Terminal hydroxylation of palmitic acid precedes subterminal hydroxylation catalyzed by the cytochrome P450 monooxygenase cyp2. Sequential glucosylation of the hydroxy fatty acid is probably catalyzed by the glycosyltransferase ugt1. The cellobiose lipid is further decorated by acetylation of the proximal glucose residue and by acylation with a short-chain beta-hydroxy fatty acid at the distal glucose residue. The acyltransferase uat1 may be a good candidate for catalyzing either acetylation or acylation of the cellobiose lipid. The fatty acid synthase fas2 may be involved in synthesis of the carbon backbone of the short-chain beta-hydroxy fatty acid esterified to the cellobiose disaccharide. The secreted UA consists of a mixture of both alpha-hydroxylated and non-hydroxylated glycolipids; therefore, alpha-hydroxylation of the long-chain fatty, catalyzed by the fatty acid hydroxylase ahd1, occurs late in UA biosynthesis and may be the last step before secretion. The polypeptide is Fatty acid hydroxylase uhd1 (Mycosarcoma maydis (Corn smut fungus)).